The following is a 58-amino-acid chain: Small ribosomal subunit protein bS21 (58 aa).

Positions Lys34–Arg58 are disordered. Residues Val43 to Arg58 show a composition bias toward basic residues.

The protein belongs to the bacterial ribosomal protein bS21 family.

The sequence is that of Small ribosomal subunit protein bS21 from Caldicellulosiruptor bescii (strain ATCC BAA-1888 / DSM 6725 / KCTC 15123 / Z-1320) (Anaerocellum thermophilum).